The primary structure comprises 197 residues: Holliday junction branch migration complex subunit RuvA (197 aa).

The domain I stretch occupies residues 1–61 (MYEYFEGTIT…ENGMTLYGFK (61 aa)). Positions 62-140 (SQQDKVLFNK…NYVAENLFTE (79 aa)) are domain II. The flexible linker stretch occupies residues 141–150 (DEPVESVFPA). A domain III region spans residues 150–197 (ALEDALLALGALGYSQKEVDRIKPKLKKLPEMSADEYIKQGLGFLLKK).

The protein belongs to the RuvA family. Homotetramer. Forms an RuvA(8)-RuvB(12)-Holliday junction (HJ) complex. HJ DNA is sandwiched between 2 RuvA tetramers; dsDNA enters through RuvA and exits via RuvB. An RuvB hexamer assembles on each DNA strand where it exits the tetramer. Each RuvB hexamer is contacted by two RuvA subunits (via domain III) on 2 adjacent RuvB subunits; this complex drives branch migration. In the full resolvosome a probable DNA-RuvA(4)-RuvB(12)-RuvC(2) complex forms which resolves the HJ.

The protein resides in the cytoplasm. Functionally, the RuvA-RuvB-RuvC complex processes Holliday junction (HJ) DNA during genetic recombination and DNA repair, while the RuvA-RuvB complex plays an important role in the rescue of blocked DNA replication forks via replication fork reversal (RFR). RuvA specifically binds to HJ cruciform DNA, conferring on it an open structure. The RuvB hexamer acts as an ATP-dependent pump, pulling dsDNA into and through the RuvAB complex. HJ branch migration allows RuvC to scan DNA until it finds its consensus sequence, where it cleaves and resolves the cruciform DNA. This chain is Holliday junction branch migration complex subunit RuvA, found in Lactobacillus delbrueckii subsp. bulgaricus (strain ATCC BAA-365 / Lb-18).